Consider the following 240-residue polypeptide: Ditrans,polycis-undecaprenyl-diphosphate synthase ((2E,6E)-farnesyl-diphosphate specific) (240 aa).

The active site involves Asp-18. Residue Asp-18 coordinates Mg(2+). Residues 19–22 (GNGR), Trp-23, Arg-31, His-35, and 63–65 (SSE) contribute to the substrate site. Asn-66 functions as the Proton acceptor in the catalytic mechanism. Substrate-binding positions include Trp-67, Arg-69, Arg-186, and 192-194 (RIS). Glu-205 is a binding site for Mg(2+).

Belongs to the UPP synthase family. In terms of assembly, homodimer. The cofactor is Mg(2+).

It catalyses the reaction 8 isopentenyl diphosphate + (2E,6E)-farnesyl diphosphate = di-trans,octa-cis-undecaprenyl diphosphate + 8 diphosphate. Catalyzes the sequential condensation of isopentenyl diphosphate (IPP) with (2E,6E)-farnesyl diphosphate (E,E-FPP) to yield (2Z,6Z,10Z,14Z,18Z,22Z,26Z,30Z,34E,38E)-undecaprenyl diphosphate (di-trans,octa-cis-UPP). UPP is the precursor of glycosyl carrier lipid in the biosynthesis of bacterial cell wall polysaccharide components such as peptidoglycan and lipopolysaccharide. The chain is Ditrans,polycis-undecaprenyl-diphosphate synthase ((2E,6E)-farnesyl-diphosphate specific) from Pasteurella multocida (strain Pm70).